The chain runs to 1390 residues: DNA-directed RNA polymerase III subunit RPC1 (1390 aa).

Residues C69, C72, C79, H82, C109, and C112 each contribute to the Zn(2+) site. Residue K144 participates in DNA binding. C156 and C159 together coordinate Zn(2+). Residues K167, S326, K348, R353, R360, and R366 each coordinate DNA. K445 carries the post-translational modification N6-acetyllysine. R464 is an RNA binding site. Mg(2+)-binding residues include D499, D501, and D503. D503 provides a ligand contact to RNA. Positions 844–856 are bridging helix; sequence PTEFFFHTMAGRE. Positions 1159, 1305, and 1323 each coordinate DNA.

Belongs to the RNA polymerase beta' chain family. As to quaternary structure, component of the RNA polymerase III (Pol III) complex consisting of 17 subunits: a ten-subunit catalytic core composed of POLR3A/RPC1, POLR3B/RPC2, POLR1C/RPAC1, POLR1D/RPAC2, POLR3K/RPC10, POLR2E/RPABC1, POLR2F/RPABC2, POLR2H/RPABC3, POLR2K/RPABC4 and POLR2L/RPABC5; a mobile stalk composed of two subunits POLR3H/RPC8 and CRCP/RPC9, protruding from the core and functioning primarily in transcription initiation; and additional subunits homologous to general transcription factors of the RNA polymerase II machinery, POLR3C/RPC3-POLR3F/RPC6-POLR3G/RPC7 heterotrimer required for transcription initiation and POLR3D/RPC4-POLR3E/RPC5 heterodimer involved in both transcription initiation and termination. As part of the RNA polymerase III complex, interacts with PKP2. It depends on Mg(2+) as a cofactor.

The protein localises to the nucleus. The protein resides in the cytoplasm. It is found in the cytosol. The catalysed reaction is RNA(n) + a ribonucleoside 5'-triphosphate = RNA(n+1) + diphosphate. Functionally, catalytic core component of RNA polymerase III (Pol III), a DNA-dependent RNA polymerase which synthesizes small non-coding RNAs using the four ribonucleoside triphosphates as substrates. Synthesizes 5S rRNA, snRNAs, tRNAs and miRNAs from at least 500 distinct genomic loci. Pol III-mediated transcription cycle proceeds through transcription initiation, transcription elongation and transcription termination stages. During transcription initiation, Pol III is recruited to DNA promoters type I, II or III with the help of general transcription factors and other specific initiation factors. Once the polymerase has escaped from the promoter it enters the elongation phase during which RNA is actively polymerized, based on complementarity with the template DNA strand. Transcription termination involves the release of the RNA transcript and polymerase from the DNA. Forms Pol III active center together with the second largest subunit POLR3B/RPC2. Appends one nucleotide at a time to the 3' end of the nascent RNA, with POLR3A/RPC1 contributing a Mg(2+)-coordinating DxDGD motif, and POLR3B/RPC2 participating in the coordination of a second Mg(2+) ion and providing lysine residues believed to facilitate Watson-Crick base pairing between the incoming nucleotide and template base. Typically, Mg(2+) ions direct a 5' nucleoside triphosphate to form a phosphodiester bond with the 3' hydroxyl of the preceding nucleotide of the nascent RNA, with the elimination of pyrophosphate. Pol III plays a key role in sensing and limiting infection by intracellular bacteria and DNA viruses. Acts as a nuclear and cytosolic DNA sensor involved in innate immune response. Can sense non-self dsDNA that serves as template for transcription into dsRNA. The non-self RNA polymerase III transcripts, such as Epstein-Barr virus-encoded RNAs (EBERs) induce type I interferon and NF-kappa-B through the RIG-I pathway. This Bos taurus (Bovine) protein is DNA-directed RNA polymerase III subunit RPC1.